The following is a 352-amino-acid chain: C-X-C chemokine receptor type 4 (352 aa).

The important for chemokine binding and signaling stretch occupies residues 1 to 21; sequence MEGISIYTSDNYTEEMGSGDY. Residues 1–38 are Extracellular-facing; it reads MEGISIYTSDNYTEEMGSGDYDSIKEPCFREENAHFNR. Sulfotyrosine is present on Tyr7. The N-linked (GlcNAc...) asparagine glycan is linked to Asn11. Position 12 is a sulfotyrosine (Tyr12). O-linked (Xyl...) (chondroitin sulfate) serine glycosylation is present at Ser18. The residue at position 21 (Tyr21) is a Sulfotyrosine. 2 disulfide bridges follow: Cys28/Cys274 and Cys109/Cys186. A helical transmembrane segment spans residues 39–63; the sequence is IFLPTIYSIIFLTGIVGNGLVILVM. Topologically, residues 64-77 are cytoplasmic; the sequence is GYQKKLRSMTDKYR. A helical transmembrane segment spans residues 78 to 99; the sequence is LHLSVADLLFVITLPFWAVDAV. Residues 94-97 are chemokine binding; that stretch reads WAVD. Residues 100-110 are Extracellular-facing; the sequence is ANWYFGNFLCK. A helical membrane pass occupies residues 111-130; sequence AVHVIYTVNLYSSVLILAFI. The segment at 113-117 is chemokine binding; it reads HVIYT. The Cytoplasmic portion of the chain corresponds to 131–154; it reads SLDRYLAIVHATNSQKPRKLLAEK. Residues 133 to 135 carry the Important for signaling motif; sequence DRY. The tract at residues 135 to 147 is involved in dimerization; when bound to chemokine; the sequence is YLAIVHATNSQKP. Residues 155–174 traverse the membrane as a helical segment; the sequence is VVYVGVWIPALLLTIPDFIF. The Extracellular segment spans residues 175–195; the sequence is ASVSEADDRYICDRFYPNDLW. Residues 186–190 are chemokine binding, important for signaling; sequence CDRFY. Residues 191-210 form an involved in dimerization region; it reads PNDLWVVVFQFQHIMVGLIL. The chain crosses the membrane as a helical span at residues 196 to 216; it reads VVVFQFQHIMVGLILPGIDIL. Over 217–241 the chain is Cytoplasmic; the sequence is SCYCIIISKLSHSKGHQKRKALKTT. The helical transmembrane segment at 242 to 261 threads the bilayer; the sequence is VILILAFFACWLPYYIGISI. The Extracellular portion of the chain corresponds to 262–282; the sequence is DSFILLEIIKQGCEFENTVHK. Residues 266-268 are involved in dimerization; sequence LLE. A helical membrane pass occupies residues 283 to 302; sequence WISITEALAFFHCCLNPILY. The Cytoplasmic segment spans residues 303-352; that stretch reads AFLGAKFKTSAQHALTSVSRGSSLKILSKGKRGGHSSVSTESESSSFHSS. Ser319 and Ser321 each carry phosphoserine. A phosphoserine; by PKC and GRK6 mark is found at Ser324 and Ser325. Residues 329-352 form a disordered region; it reads LSKGKRGGHSSVSTESESSSFHSS. Ser330 is modified (phosphoserine; by GRK6). Lys331 is covalently cross-linked (Glycyl lysine isopeptide (Lys-Gly) (interchain with G-Cter in ubiquitin)). A compositionally biased stretch (low complexity) spans 337–352; sequence HSSVSTESESSSFHSS. Phosphoserine; by GRK6 is present on Ser339. Phosphoserine is present on residues Ser348 and Ser351.

This sequence belongs to the G-protein coupled receptor 1 family. As to quaternary structure, monomer. Can form homodimers. Interacts with CD164. Interacts with ARRB2; the interaction is dependent on the C-terminal phosphorylation of CXCR4 and allows activation of MAPK1 and MAPK3. Interacts with ARR3; the interaction is dependent on the C-terminal phosphorylation of CXCR4 and modulates calcium mobilization. Interacts with RNF113A; the interaction, enhanced by CXCL12, promotes CXCR4 ubiquitination and subsequent degradation. Interacts (via the cytoplasmic C-terminal) with ITCH (via the WW domains I and II); the interaction, enhanced by CXCL12, promotes CXCR4 ubiquitination and leads to its degradation. Interacts with extracellular ubiquitin. Interacts with DBN1; this interaction is enhanced by antigenic stimulation. Following LPS binding, may form a complex with GDF5, HSP90AA1 and HSPA8. Post-translationally, phosphorylated on agonist stimulation. Rapidly phosphorylated on serine and threonine residues in the C-terminal. Phosphorylation at Ser-324 and Ser-325 leads to recruitment of ITCH, ubiquitination and protein degradation. In terms of processing, ubiquitinated after ligand binding, leading to its degradation. Ubiquitinated by ITCH at the cell membrane on agonist stimulation. The ubiquitin-dependent mechanism, endosomal sorting complex required for transport (ESCRT), then targets CXCR4 for lysosomal degradation. This process is dependent also on prior Ser-/Thr-phosphorylation in the C-terminal of CXCR4. Also binding of ARRB1 to STAM negatively regulates CXCR4 sorting to lysosomes though modulating ubiquitination of SFR5S. Sulfation is required for efficient binding of CXCL12/SDF-1alpha and promotes its dimerization. Post-translationally, O- and N-glycosylated. N-glycosylation can mask coreceptor function. The O-glycosylation chondroitin sulfate attachment does not affect interaction with CXCL12/SDF-1alpha nor its coreceptor activity.

It localises to the cell membrane. It is found in the cell junction. The protein resides in the early endosome. The protein localises to the late endosome. Its subcellular location is the lysosome. Its function is as follows. Receptor for the C-X-C chemokine CXCL12/SDF-1 that transduces a signal by increasing intracellular calcium ion levels and enhancing MAPK1/MAPK3 activation. Involved in the AKT signaling cascade. Plays a role in regulation of cell migration, e.g. during wound healing. Acts as a receptor for extracellular ubiquitin; leading to enhanced intracellular calcium ions and reduced cellular cAMP levels. Binds bacterial lipopolysaccharide (LPS) et mediates LPS-induced inflammatory response, including TNF secretion by monocytes. Involved in hematopoiesis and in cardiac ventricular septum formation. Also plays an essential role in vascularization of the gastrointestinal tract, probably by regulating vascular branching and/or remodeling processes in endothelial cells. Involved in cerebellar development. In the CNS, could mediate hippocampal-neuron survival. This Macaca mulatta (Rhesus macaque) protein is C-X-C chemokine receptor type 4 (CXCR4).